A 73-amino-acid polypeptide reads, in one-letter code: Putative antitoxin VapB38 (73 aa).

Functionally, probable antitoxin component of a type II toxin-antitoxin (TA) system. Its putative cognate toxin is VapC38. The protein is Putative antitoxin VapB38 (vapB38) of Mycobacterium tuberculosis (strain ATCC 25618 / H37Rv).